Reading from the N-terminus, the 69-residue chain is Conotoxin SIVA (69 aa).

An N-terminal signal peptide occupies residues 1–21 (MGMRMMFTVFLLVVLATTVVS). The propeptide occupies 22-38 (TPSDRASDGRNAAVHER). Glutamine 39 is modified (pyrrolidone carboxylic acid). Serine 45 is a glycosylation site (O-linked (HexNAc...) serine). Proline 55, proline 60, and proline 61 each carry 4-hydroxyproline. Residue cysteine 68 is modified to Cysteine amide.

This sequence belongs to the conotoxin A superfamily. Contains 3 disulfide bonds. In terms of processing, O-linked glycan consists of Hex3-HexNAc2 pentasaccharide. In terms of tissue distribution, expressed by the venom duct.

It localises to the secreted. Functionally, neurotoxin with probable activity on sodium channel. Induces intense repetitive firing of the frog neuromuscular junction, leading to a tetanic contracture in muscle fiber (spastic paralysis). In vivo, shows the same effect as the whole venom when injected on fish. Intraperitoneal injection into fish induces a period of rapid swimming followed by a spastic paralysis with stiff fibrillating fins. At high doses, the peptide is lethal to both fish and mice. The protein is Conotoxin SIVA of Conus striatus (Striated cone).